We begin with the raw amino-acid sequence, 369 residues long: Coiled-coil domain-containing protein 149 (369 aa).

The stretch at 1-249 forms a coiled coil; the sequence is MKENNNAEIL…AKYKQMAEAV (249 aa).

This sequence belongs to the CCDC149 family. In terms of tissue distribution, expressed in amphid and phasmid ciliated neurons, and also pharyngeal, touch receptor and motor neurons.

The protein localises to the cell projection. The protein resides in the cilium. The polypeptide is Coiled-coil domain-containing protein 149 (Caenorhabditis elegans).